The sequence spans 445 residues: Putative diacyglycerol O-acyltransferase Rv2285 (445 aa).

His135 functions as the Proton acceptor in the catalytic mechanism.

This sequence belongs to the long-chain O-acyltransferase family.

It catalyses the reaction an acyl-CoA + a 1,2-diacyl-sn-glycerol = a triacyl-sn-glycerol + CoA. The enzyme catalyses di-(9Z)-octadecenoylglycerol + (9Z)-octadecenoyl-CoA = 1,2,3-tri-(9Z-octadecenoyl)-glycerol + CoA. It functions in the pathway glycerolipid metabolism; triacylglycerol biosynthesis. In terms of biological role, catalyzes the terminal and only committed step in triacylglycerol synthesis by using diacylglycerol and fatty acyl CoA as substrates. Required for storage lipid synthesis. Functionally, upon expression in E.coli functions weakly as a triacylglycerol synthase, making triacylglycerol (TG) from diolein and long-chain fatty acyl-CoA. Has very weak wax synthase activity, incorporating palmityl alcohol into wax esters in the presence of palmitoyl-CoA. The sequence is that of Putative diacyglycerol O-acyltransferase Rv2285 from Mycobacterium tuberculosis (strain ATCC 25618 / H37Rv).